The sequence spans 438 residues: Alkylcitrate synthase tstJ (438 aa).

Catalysis depends on residues histidine 309 and aspartate 365.

The protein belongs to the citrate synthase family.

It catalyses the reaction (2E,10E)-dode-2,10-dicenoyl-CoA + oxaloacetate + H2O = (4E,11E)-2-hydroxytrideca-4,11-dien-1,2,3-tricarboxylate + CoA + H(+). The protein operates within secondary metabolite biosynthesis. Functionally, alkylcitrate synthase; part of the gene cluster that mediates the biosynthesis of the antihypercholesterolemic agents phomoidrides which are dimeric anhydrides. Within the pathway, the alkylcitrate synthase (ACS) tstJ and the alkylcitrate dehydratase (ACDH) tstI produce the decarboxylated monomeric anhydrides by coupling the C12-fatty acyl product from phiA with oxalacetic acid. The pathway begins with the highly reducing polyketide synthase tstA that catalyzes the formation of a C12-fatty acyl-ACP, starting from one acetate and 5 malonate units. The hydrolase tstM is involved in the release of the C12-fatty acyl chain from phiA. The alkylcitrate synthase (ACS) tstJ and the alkylcitrate dehydratase (ACDH) tstI then give rise to decarboxylated monomeric anhydrides by coupling the C12-fatty acyl chain with oxalacetic acid. The cyclase tstC is responsible for the dimerization of the monomeric anhydrides which leads to the production of prephomoidride that contains the characteristic bicyclo[4.3.1]deca-1,6-diene system of phomoidrides. Iterative oxidation catalyzed by the alpha-ketoglutarate-dependent dioxygenase tstK produced then phomoidride A. Finally, the methyltransferase tstE converts phomoidride A to phomoidride B via an acetalization reaction. The phosphatidylethanolamine-binding protein tstB and tstN are not essential for dimerization and their functions have still to be determined. The sequence is that of Alkylcitrate synthase tstJ from Talaromyces stipitatus (strain ATCC 10500 / CBS 375.48 / QM 6759 / NRRL 1006) (Penicillium stipitatum).